The following is a 173-amino-acid chain: Alpha-crystallin A chain (173 aa).

Position 1 is an N-acetylmethionine (M1). The tract at residues 1–63 (MDIAIQHPWF…RTVLDSGVSE (63 aa)) is required for complex formation with BFSP1 and BFSP2. At Q6 the chain carries Deamidated glutamine; partial. S45 bears the Phosphoserine mark. Residue Q50 is modified to Deamidated glutamine; partial. The sHSP domain maps to 52 to 162 (LFRTVLDSGV…GHSERAIPVS (111 aa)). An N6-acetyllysine modification is found at K70. H79 is a binding site for Zn(2+). Deamidated glutamine; partial is present on Q90. At K99 the chain carries N6-acetyllysine. Position 100 (H100) interacts with Zn(2+). Residue N101 is modified to Deamidated asparagine; partial. Residues E102 and H107 each coordinate Zn(2+). At S122 the chain carries Phosphoserine. The residue at position 123 (N123) is a Deamidated asparagine; partial. Residues 144–173 (PKVPSGVDAGHSERAIPVSREEKPSSAPTS) form a disordered region. Positions 153–167 (GHSERAIPVSREEKP) are enriched in basic and acidic residues. Residue H154 participates in Zn(2+) binding. O-linked (GlcNAc) serine glycosylation occurs at S162.

It belongs to the small heat shock protein (HSP20) family. As to quaternary structure, heteromer composed of three CRYAA and one CRYAB subunits. Inter-subunit bridging via zinc ions enhances stability, which is crucial as there is no protein turn over in the lens. Can also form homodimers and homotetramers (dimers of dimers) which serve as the building blocks of homooligomers. Within homooligomers, the zinc-binding motif is created from residues of 3 different molecules. His-100 and Glu-102 from one molecule are ligands of the zinc ion, and His-107 and His-154 residues from additional molecules complete the site with tetrahedral coordination geometry. Part of a complex required for lens intermediate filament formation composed of BFSP1, BFSP2 and CRYAA. Post-translationally, acetylation at Lys-70 may increase chaperone activity. In terms of processing, undergoes age-dependent proteolytical cleavage at the C-terminus.

The protein localises to the cytoplasm. The protein resides in the nucleus. Contributes to the transparency and refractive index of the lens. Acts as a chaperone, preventing aggregation of various proteins under a wide range of stress conditions. Required for the correct formation of lens intermediate filaments as part of a complex composed of BFSP1, BFSP2 and CRYAA. The protein is Alpha-crystallin A chain (CRYAA) of Sus scrofa (Pig).